We begin with the raw amino-acid sequence, 396 residues long: Protein DDI1 homolog 1 (396 aa).

The Ubiquitin-like domain occupies 1–81 (MLITVYCVRR…VVLLQKDNVG (81 aa)). The disordered stretch occupies residues 82-130 (PRAPGRAPNQPRVDFSGIAVPGTSSSRPQHPGQQQQRTPAAQRSQGLAS). Over residues 103-128 (GTSSSRPQHPGQQQQRTPAAQRSQGL) the composition is skewed to polar residues. The active site involves aspartate 260. A disordered region spans residues 374–396 (SGQDESSDKEITHSVMDSGRKEH). A compositionally biased stretch (basic and acidic residues) spans 379 to 396 (SSDKEITHSVMDSGRKEH).

The protein belongs to the DDI1 family.

With respect to regulation, inhibited by the proteinase inhibitors amprenavir, indinavir, lopinavir, isovaleryl pepstatin, ritonavir and saquinavir. Probable aspartic protease. Seems to act as a proteasomal shuttle which links the proteasome and replication fork proteins like RTF2. Required, with DDI2, for cellular survival following replication stress. Together or redudantly with DDI2, removes RTF2 from stalled forks to allow cell cycle progression after replication stress and maintains genome integrity. The protein is Protein DDI1 homolog 1 (DDI1) of Homo sapiens (Human).